Reading from the N-terminus, the 528-residue chain is Calcium-dependent protein kinase 4 (528 aa).

Over residues 1 to 16 (MGQEMSTQSDMQNENQ) the composition is skewed to polar residues. A disordered region spans residues 1-36 (MGQEMSTQSDMQNENQKGNKRNLKGSQGKNGLKERS). Residue glycine 2 is the site of N-myristoyl glycine attachment. The region spanning 70 to 328 (YKGIKILGKG…ARDALEHEWI (259 aa)) is the Protein kinase domain. Residues 76-84 (LGKGSFGEV) and lysine 99 each bind ATP. The active-site Proton acceptor is aspartate 193. A J domain autoinhibitory motif motif is present at residues 350–358 (NIKQFQSTQ). Residues 350–386 (NIKQFQSTQKLAQAALLYMGSKLTTIDETKELTKIFK) are j domain. A J domain EF-hand interaction motif motif is present at residues 359–368 (KLAQAALLYM). EF-hand domains follow at residues 376–411 (DETK…LLKL), 423–458 (AIEV…RKLL), 459–494 (LSTE…GDVS), and 498–528 (WKTV…LCNY). Ca(2+) is bound by residues aspartate 389, asparagine 391, aspartate 393, glutamine 395, glutamate 400, aspartate 436, aspartate 438, asparagine 440, tyrosine 442, glutamate 447, aspartate 472, aspartate 474, serine 476, lysine 478, glutamate 483, aspartate 506, asparagine 508, aspartate 510, glutamate 512, and glutamate 517.

It belongs to the protein kinase superfamily. Ser/Thr protein kinase family. CDPK subfamily. As to quaternary structure, may interact with the pre-replication MCM complex prior male gametogenesis activation. Mg(2+) is required as a cofactor. In terms of processing, myristoylated; myristoylation may target it to different subcellular compartments. During male gametogenesis, myristoylation is required to initiate DNA replication but not for mitotic spindle assembly or axoneme activation. Post-translationally, not palmitoylated. May be autophosphorylated on Thr-234 in vitro.

The protein localises to the cytoplasm. Its subcellular location is the membrane. It localises to the chromosome. The enzyme catalyses L-seryl-[protein] + ATP = O-phospho-L-seryl-[protein] + ADP + H(+). It carries out the reaction L-threonyl-[protein] + ATP = O-phospho-L-threonyl-[protein] + ADP + H(+). Its activity is regulated as follows. Activated by calcium. Upon calcium binding to the EF-hand domains, the C-terminus of the junction domain (J domain) undergoes a conformational change which results in the dissociation of the pseudo-substrate inhibitory motif from the catalytic domain. This, in turn, may facilitate the autophosphorylation of the activation loop at Thr-234, which leads to the kinase activation. Intracellular calcium increase is triggered by xanthurenic acid (XA), a small mosquito molecule that induces the differentiation of specialized transmission stages, the gametocytes, into male and female gametes. Activated by a decrease in temperature (20 degrees Celsius) and an increase in pH (7.6) occurring when the parasite is ingested by in the mosquito. Functionally, calcium-dependent protein kinase which acts as a sensor and effector of intracellular Ca(2+) levels probably in part downstream of cGMP-activated PKG kinase. Plays a central role in the host erythrocytes and hepatocytes infection cycles, sexual reproduction and mosquito transmission of the parasite. During the liver stage, involved in sporozoite motility and thus in sporozoite invasion of host hepatocytes, probably together with CDPK1 and CDPK5. Involved in merosome egress from host hepatocytes, probably together with CDPK5. During the asexual blood stage, involved in merozoite invasion of host erythrocytes and motility by stabilizing the inner membrane complex, a structure below the plasma membrane which acts as an anchor for the glidosome, an acto-myosin motor. Required for cell cycle progression in the male gametocyte. During male gametogenesis in the mosquito gut, required to initiate the first round of DNA replication, probably by facilitating the assembly of the pre-replicative MCM complex, to assemble the first mitotic spindle and, at the end of gametogenesis, to initiate axoneme motility, cytokinesis and subsequent exflagellation. For each of these steps, may phosphorylate SOC1, SOC2 and SOC3, respectively. Together with CDPK1, regulates ookinete gliding in the mosquito host midgut. During male gametogenesis in the mosquito gut, required to initiate the first round of DNA replication, probably by facilitating the assembly of the pre-replicative MCM complex, and to assemble the first mitotic spindle. Its function is as follows. At the end of male gametogenesis in the mosquito gut, required to initiate axoneme motility, cytokinesis and subsequent exflagellation. The polypeptide is Calcium-dependent protein kinase 4 (Plasmodium berghei (strain Anka)).